The chain runs to 126 residues: Large ribosomal subunit protein eL28 (126 aa).

S2 bears the N-acetylserine mark.

This sequence belongs to the eukaryotic ribosomal protein eL28 family.

This chain is Large ribosomal subunit protein eL28 (rpl-28), found in Caenorhabditis elegans.